The sequence spans 427 residues: Glutamate-1-semialdehyde 2,1-aminomutase (427 aa).

At Lys265 the chain carries N6-(pyridoxal phosphate)lysine.

This sequence belongs to the class-III pyridoxal-phosphate-dependent aminotransferase family. HemL subfamily. As to quaternary structure, homodimer. It depends on pyridoxal 5'-phosphate as a cofactor.

It localises to the cytoplasm. The enzyme catalyses (S)-4-amino-5-oxopentanoate = 5-aminolevulinate. It participates in porphyrin-containing compound metabolism; protoporphyrin-IX biosynthesis; 5-aminolevulinate from L-glutamyl-tRNA(Glu): step 2/2. The chain is Glutamate-1-semialdehyde 2,1-aminomutase from Bordetella pertussis (strain Tohama I / ATCC BAA-589 / NCTC 13251).